Here is a 548-residue protein sequence, read N- to C-terminus: Folylpolyglutamate synthase (548 aa).

130 to 133 (GKGS) contacts ATP. Mg(2+) contacts are provided by serine 157, glutamate 234, and histidine 262. Residues arginine 382 and aspartate 396 each coordinate ATP.

It belongs to the folylpolyglutamate synthase family. A monovalent cation is required as a cofactor.

Its subcellular location is the mitochondrion inner membrane. It is found in the mitochondrion matrix. It localises to the cytoplasm. The catalysed reaction is (6S)-5,6,7,8-tetrahydrofolyl-(gamma-L-Glu)(n) + L-glutamate + ATP = (6S)-5,6,7,8-tetrahydrofolyl-(gamma-L-Glu)(n+1) + ADP + phosphate + H(+). The protein operates within cofactor biosynthesis; tetrahydrofolylpolyglutamate biosynthesis. In terms of biological role, catalyzes conversion of folates to polyglutamate derivatives allowing concentration of folate compounds in the cell and the intracellular retention of these cofactors, which are important substrates for most of the folate-dependent enzymes that are involved in one-carbon transfer reactions involved in purine, pyrimidine and amino acid synthesis. Required for methionine synthesis and maintenance of intact mitochondrial DNA. Involved in telomere maintenance. The chain is Folylpolyglutamate synthase from Saccharomyces cerevisiae (strain FostersO) (Baker's yeast).